A 185-amino-acid chain; its full sequence is Peptidyl-tRNA hydrolase (185 aa).

Residue Y14 coordinates tRNA. The active-site Proton acceptor is H19. TRNA contacts are provided by Y65, N67, and N113.

This sequence belongs to the PTH family. Monomer.

The protein localises to the cytoplasm. It carries out the reaction an N-acyl-L-alpha-aminoacyl-tRNA + H2O = an N-acyl-L-amino acid + a tRNA + H(+). Hydrolyzes ribosome-free peptidyl-tRNAs (with 1 or more amino acids incorporated), which drop off the ribosome during protein synthesis, or as a result of ribosome stalling. In terms of biological role, catalyzes the release of premature peptidyl moieties from peptidyl-tRNA molecules trapped in stalled 50S ribosomal subunits, and thus maintains levels of free tRNAs and 50S ribosomes. The sequence is that of Peptidyl-tRNA hydrolase from Rickettsia akari (strain Hartford).